Consider the following 317-residue polypeptide: Beta-ketoacyl-[acyl-carrier-protein] synthase III (317 aa).

Active-site residues include Cys-112 and His-244. The segment at 245-249 is ACP-binding; that stretch reads QANVR. Asn-274 is an active-site residue.

It belongs to the thiolase-like superfamily. FabH family. In terms of assembly, homodimer.

Its subcellular location is the cytoplasm. The enzyme catalyses malonyl-[ACP] + acetyl-CoA + H(+) = 3-oxobutanoyl-[ACP] + CO2 + CoA. It functions in the pathway lipid metabolism; fatty acid biosynthesis. Catalyzes the condensation reaction of fatty acid synthesis by the addition to an acyl acceptor of two carbons from malonyl-ACP. Catalyzes the first condensation reaction which initiates fatty acid synthesis and may therefore play a role in governing the total rate of fatty acid production. Possesses both acetoacetyl-ACP synthase and acetyl transacylase activities. Its substrate specificity determines the biosynthesis of branched-chain and/or straight-chain of fatty acids. The sequence is that of Beta-ketoacyl-[acyl-carrier-protein] synthase III from Rickettsia bellii (strain OSU 85-389).